The following is a 606-amino-acid chain: Armadillo repeat-containing X-linked protein 5 (606 aa).

The disordered stretch occupies residues 1 to 85 (MIGSKTKRKA…KVKKKKDKTN (85 aa)). A compositionally biased stretch (polar residues) spans 15 to 26 (GASSKPGTNSPA). The span at 40–59 (VKAEPKEEWGNQAEARDEAV) shows a compositional bias: basic and acidic residues. 4 ARM repeats span residues 349 to 388 (CKSR…GISP), 470 to 509 (VKFD…CLSK), 511 to 551 (QANT…NINF), and 568 to 606 (SELI…ILKL).

It belongs to the eutherian X-chromosome-specific Armcx family. Highly expressed in the developing neural tissues, neural crest derivatives and hind limbs.

This chain is Armadillo repeat-containing X-linked protein 5 (Armcx5), found in Mus musculus (Mouse).